The sequence spans 310 residues: Porphobilinogen deaminase (310 aa).

An S-(dipyrrolylmethanemethyl)cysteine modification is found at Cys-242.

The protein belongs to the HMBS family. In terms of assembly, monomer. Dipyrromethane is required as a cofactor.

It catalyses the reaction 4 porphobilinogen + H2O = hydroxymethylbilane + 4 NH4(+). It functions in the pathway porphyrin-containing compound metabolism; protoporphyrin-IX biosynthesis; coproporphyrinogen-III from 5-aminolevulinate: step 2/4. Functionally, tetrapolymerization of the monopyrrole PBG into the hydroxymethylbilane pre-uroporphyrinogen in several discrete steps. This chain is Porphobilinogen deaminase, found in Halorhodospira halophila (strain DSM 244 / SL1) (Ectothiorhodospira halophila (strain DSM 244 / SL1)).